Consider the following 127-residue polypeptide: Protein B20 (127 aa).

The segment at 86-127 (DRTGMNSESDSESDNISIKTEYENEYEFYDETQDQSTQHNDL) is disordered. Over residues 108–118 (ENEYEFYDETQ) the composition is skewed to acidic residues.

The chain is Protein B20 from Homo sapiens (Human).